Reading from the N-terminus, the 292-residue chain is uncharacterized protein (292 aa).

Residues serine 44 and tyrosine 106 each act as charge relay system in the active site. The active-site Proton donor is tyrosine 132. Catalysis depends on lysine 161, which acts as the Schiff-base intermediate with substrate.

This sequence belongs to the DapA family. Homotetramer.

It localises to the cytoplasm. This is an uncharacterized protein from Thermoplasma acidophilum (strain ATCC 25905 / DSM 1728 / JCM 9062 / NBRC 15155 / AMRC-C165).